Here is a 463-residue protein sequence, read N- to C-terminus: Probable mannan endo-1,4-beta-mannosidase F (463 aa).

The N-terminal stretch at 1–18 is a signal peptide; that stretch reads MRSLSSIALLSVVGAASA. The 36-residue stretch at 19-54 folds into the CBM1 domain; that stretch reads QAGPWAQCGGKSFSGSSECASGWKCQELNEWFSQCV. The disordered stretch occupies residues 57–78; sequence AESTTPTVSSTPTPTDAPSVSI. A compositionally biased stretch (low complexity) spans 59–77; that stretch reads STTPTVSSTPTPTDAPSVS. The ser-rich linker stretch occupies residues 75 to 118; that stretch reads SVSITASATTGINKSISVSSASKSTPLPSSSSASPSPRPTGSGS. A glycan (N-linked (GlcNAc...) asparagine) is linked at Asn-87. Over residues 93–118 the composition is skewed to low complexity; it reads SSASKSTPLPSSSSASPSPRPTGSGS. Residues 93-121 are disordered; it reads SSASKSTPLPSSSSASPSPRPTGSGSFAK. The segment at 119 to 463 is catalytic; sequence FAKADGLQFS…MDHMENVNKN (345 aa). The substrate site is built by Trp-171 and Asn-285. Catalysis depends on Glu-286, which acts as the Proton donor. Position 361 (Tyr-361) interacts with substrate. Glu-395 acts as the Nucleophile in catalysis. Residue Trp-424 coordinates substrate.

The protein belongs to the glycosyl hydrolase 5 (cellulase A) family.

The protein localises to the secreted. The enzyme catalyses Random hydrolysis of (1-&gt;4)-beta-D-mannosidic linkages in mannans, galactomannans and glucomannans.. Functionally, endo-1,4-mannanase, a crucial enzyme for depolymerization of seed galactomannans and wood galactoglucomannans. The sequence is that of Probable mannan endo-1,4-beta-mannosidase F (manF) from Aspergillus flavus (strain ATCC 200026 / FGSC A1120 / IAM 13836 / NRRL 3357 / JCM 12722 / SRRC 167).